The primary structure comprises 177 residues: SPbeta prophage-derived uncharacterized protein YopI (177 aa).

The chain crosses the membrane as a helical span at residues 11–31; that stretch reads FEGIIGALLGVIVTLILTHIL.

The protein resides in the cell membrane. The chain is SPbeta prophage-derived uncharacterized protein YopI (yopI) from Bacillus subtilis (strain 168).